The following is a 219-amino-acid chain: PKHD-type hydroxylase Plav_0037 (219 aa).

Residues 78 to 172 (NFIRILLSRY…RRAAVGWIRS (95 aa)) form the Fe2OG dioxygenase domain. His96, Asp98, and His153 together coordinate Fe cation. Arg163 is a 2-oxoglutarate binding site.

Requires Fe(2+) as cofactor. It depends on L-ascorbate as a cofactor.

The chain is PKHD-type hydroxylase Plav_0037 from Parvibaculum lavamentivorans (strain DS-1 / DSM 13023 / NCIMB 13966).